A 511-amino-acid polypeptide reads, in one-letter code: Tryptophan 5-halogenase PyrH (511 aa).

Gly10, Ala13, Ser36, Val39, Ile42, Val44, and Ala47 together coordinate FAD. L-tryptophan is bound at residue Ser50. Lys75 is a catalytic residue. Positions 93, 160, and 163 each coordinate L-tryptophan. FAD contacts are provided by Val195 and Leu345. Positions 356 and 357 each coordinate chloride. Ile358 contributes to the FAD binding site. Residues Gly450 and Tyr454 each coordinate L-tryptophan.

It belongs to the flavin-dependent halogenase family. Bacterial tryptophan halogenase subfamily. Homodimer.

The enzyme catalyses L-tryptophan + FADH2 + chloride + O2 = 5-chloro-L-tryptophan + FAD + 2 H2O. It participates in antibiotic biosynthesis. Functionally, involved in the biosynthesis of the antibiotic compound pyrroindomycin B. Catalyzes the chlorination of tryptophan (Trp) at C5 position to yield 5-chloro-L-tryptophan. It is also able to use bromide ions to generate monobrominated Trp, but the brominating activity is only about 75% of the chlorinating activity. The protein is Tryptophan 5-halogenase PyrH of Streptomyces rugosporus.